The following is a 362-amino-acid chain: CLIP domain-containing serine protease B10 (362 aa).

Positions 1–19 are cleaved as a signal peptide; the sequence is MAKVVDCVLLLAFIAVVRG. Residues 22–75 form the Clip domain; sequence ACRTPDHRDGVCHPVQQCPSVRDEFFNSDRVLSEDEIDYLRKLQCKTKDVTICC. 3 cysteine pairs are disulfide-bonded: C23–C74, C33–C66, and C39–C75. The 252-residue stretch at 110–361 folds into the Peptidase S1 domain; sequence IIGGNYTAID…YLDWIRQNIR (252 aa). N-linked (GlcNAc...) asparagine glycosylation is present at N114. Cysteines 140 and 156 form a disulfide. Catalysis depends on charge relay system residues H155 and D220. The N-linked (GlcNAc...) asparagine glycan is linked to N254. 2 cysteine pairs are disulfide-bonded: C285–C300 and C310–C337. The active-site Charge relay system is S314.

It belongs to the peptidase S1 family. CLIP subfamily. Forms a covalent heterodimer with SRPN2; the interaction inhibits CLIPB10 catalytic activity. Cleaved by an unknown protease into an active form.

Its subcellular location is the secreted. Its activity is regulated as follows. Inhibited by serpin SRPN2. In terms of biological role, serine protease which preferentially cleaves after arginine residues. Involved in the innate immune response against parasite P.bergei infection by activating the melanization cascade. Probably in the hemolymph, cleaves and activates prophenoloxidase (PPO), which functions in the formation of pigments such as melanin and other polyphenolic compounds. In the susceptible strain G3, appears to be dispensable for ookinete elimination which occurs by lysis. The chain is CLIP domain-containing serine protease B10 from Anopheles gambiae (African malaria mosquito).